The sequence spans 20 residues: Unknown protein NF009 from 2D-PAGE (20 aa).

The interval Ala-1–Pro-20 is disordered.

In Naegleria fowleri (Brain eating amoeba), this protein is Unknown protein NF009 from 2D-PAGE.